We begin with the raw amino-acid sequence, 387 residues long: Queuine tRNA-ribosyltransferase (387 aa).

Asp93 functions as the Proton acceptor in the catalytic mechanism. Substrate is bound by residues 93–97, Asp147, Gln190, and Gly217; that span reads DSGGF. The interval 248–254 is RNA binding; sequence GVGTPDD. Residue Asp267 is the Nucleophile of the active site. An RNA binding; important for wobble base 34 recognition region spans residues 272–276; it reads TRAGR. Residues Cys305, Cys307, Cys310, and His336 each coordinate Zn(2+).

Belongs to the queuine tRNA-ribosyltransferase family. Homodimer. Within each dimer, one monomer is responsible for RNA recognition and catalysis, while the other monomer binds to the replacement base PreQ1. It depends on Zn(2+) as a cofactor.

It carries out the reaction 7-aminomethyl-7-carbaguanine + guanosine(34) in tRNA = 7-aminomethyl-7-carbaguanosine(34) in tRNA + guanine. It functions in the pathway tRNA modification; tRNA-queuosine biosynthesis. In terms of biological role, catalyzes the base-exchange of a guanine (G) residue with the queuine precursor 7-aminomethyl-7-deazaguanine (PreQ1) at position 34 (anticodon wobble position) in tRNAs with GU(N) anticodons (tRNA-Asp, -Asn, -His and -Tyr). Catalysis occurs through a double-displacement mechanism. The nucleophile active site attacks the C1' of nucleotide 34 to detach the guanine base from the RNA, forming a covalent enzyme-RNA intermediate. The proton acceptor active site deprotonates the incoming PreQ1, allowing a nucleophilic attack on the C1' of the ribose to form the product. After dissociation, two additional enzymatic reactions on the tRNA convert PreQ1 to queuine (Q), resulting in the hypermodified nucleoside queuosine (7-(((4,5-cis-dihydroxy-2-cyclopenten-1-yl)amino)methyl)-7-deazaguanosine). The polypeptide is Queuine tRNA-ribosyltransferase (Gluconacetobacter diazotrophicus (strain ATCC 49037 / DSM 5601 / CCUG 37298 / CIP 103539 / LMG 7603 / PAl5)).